A 362-amino-acid chain; its full sequence is uncharacterized protein (362 aa).

Belongs to the carbohydrate kinase PfkB family.

This is an uncharacterized protein from Escherichia coli (strain K12).